Reading from the N-terminus, the 396-residue chain is Putative N(4)-(beta-N-acetylglucosaminyl)-L-asparaginase GE19290 (396 aa).

The signal sequence occupies residues 1-23; it reads MKRHLKACLWVLCFASTALSSLA. Cystine bridges form between Cys100–Cys105 and Cys199–Cys215. Thr246 serves as the catalytic Nucleophile. Substrate contacts are provided by residues 274-277 and 297-300; these read RVGD and TGDG. Cys357 and Cys384 form a disulfide bridge.

The protein belongs to the Ntn-hydrolase family. Heterotetramer of two alpha and two beta chains arranged as a dimer of alpha/beta heterodimers. Cleaved into an alpha and beta chain by autocatalysis; this activates the enzyme. The N-terminal residue of the beta subunit is responsible for the nucleophile hydrolase activity.

The enzyme catalyses N(4)-(beta-N-acetyl-D-glucosaminyl)-L-asparagine + H2O = N-acetyl-beta-D-glucosaminylamine + L-aspartate + H(+). Its function is as follows. Cleaves the GlcNAc-Asn bond which joins oligosaccharides to the peptide of asparagine-linked glycoproteins. The polypeptide is Putative N(4)-(beta-N-acetylglucosaminyl)-L-asparaginase GE19290 (Drosophila yakuba (Fruit fly)).